Consider the following 455-residue polypeptide: MKPGFKDLRAVGYQTDVPYVSLSNYCWSFNCPKPGAEVEFLNMTFQLMNSTATIVQIDADIEQSIDMVSNGSADITLVSARQTLDRMKKVDFTTPIGFVYYGYLVREIPELAVADYIMRLFDYDTLAILISFGLIIGALLYLYTWIFGLRVRSLLDWMFISCSGIIHQFMFRISSPICALVLIGFWLLCCLVIITYYEAKLKSFLLLSHHRGTIFNTLDGVLEAAEHKGWTLVIQERGYTPYLYCNPSQCARLDRLKSRINFIGADDDANLLLGQDKHVGFSALASDLAETDITYFDYHSKILFVRDKIMAPEYLAYAVNKNVKGLREKFNRAVAYTKSGYGTVRSRYIASFPSYNSVTSQSQTITVLQTSHFIQLYKFCFIFYGIAIIVFILEIIFHRMTKNFTFFGHSYNYHLSGFEWRFARPKWIHFPRRNTVILPLSKSYSPDNERRVTVC.

Residues Asn42, Asn49, and Asn70 are each glycosylated (N-linked (GlcNAc...) asparagine). A run of 4 helical transmembrane segments spans residues Ala127–Phe147, Ser153–Ile173, Ile177–Tyr197, and Tyr377–Phe397. An N-linked (GlcNAc...) asparagine glycan is attached at Asn403.

Its subcellular location is the membrane. This is an uncharacterized protein from Caenorhabditis elegans.